Reading from the N-terminus, the 142-residue chain is Large ribosomal subunit protein uL13 (142 aa).

The protein belongs to the universal ribosomal protein uL13 family. Part of the 50S ribosomal subunit.

This protein is one of the early assembly proteins of the 50S ribosomal subunit, although it is not seen to bind rRNA by itself. It is important during the early stages of 50S assembly. In Hahella chejuensis (strain KCTC 2396), this protein is Large ribosomal subunit protein uL13.